We begin with the raw amino-acid sequence, 198 residues long: Ras-related protein Rab-34, isoform NARR (198 aa).

13 tandem repeats follow at residues 7 to 15 (PRDDVGSPR), 16 to 24 (PRVIVGTIR), 25 to 33 (PRVIVGTIR), 34 to 42 (PRVIVGSAR), 43 to 51 (ARPPPDGTP), 52 to 60 (RPQLAAEES), 61 to 69 (PRPRVIFGT), 70 to 78 (PRARVILGS), 79 to 87 (PRPRVIVSS), 88 to 96 (PWPAVVVAS), 97 to 105 (PRPRTPVGS), 106 to 114 (PWPRVVVGT), and 115 to 123 (PRPRVIVGS). Positions 7-125 (PRDDVGSPRP…RPRVIVGSPR (119 aa)) are 13 x 9 AA approximate tandem-repeats of P-R-V-I-V-G-(S/T)-P-R. Residue serine 13 is modified to Phosphoserine. The segment at 37 to 64 (IVGSARARPPPDGTPRPQLAAEESPRPR) is disordered. A Phosphothreonine modification is found at threonine 69. Residues serine 78, serine 87, and serine 96 each carry the phosphoserine modification. The span at 94 to 121 (VASPRPRTPVGSPWPRVVVGTPRPRVIV) shows a compositional bias: low complexity. The interval 94–198 (VASPRPRTPV…GAPDRHRGQI (105 aa)) is disordered. Serine 123 bears the Phosphoserine mark. Positions 145 to 157 (RRQDEHSGTRAEG) are enriched in basic and acidic residues. The span at 161–178 (GGAAPVPEEGGRFARAQR) shows a compositional bias: low complexity.

In terms of assembly, may interact with EIF5A and ERF1. In terms of processing, phosphorylated during M-phase.

It localises to the nucleus. Its subcellular location is the nucleolus. In Homo sapiens (Human), this protein is Ras-related protein Rab-34, isoform NARR (RAB34).